We begin with the raw amino-acid sequence, 343 residues long: tRNA N6-adenosine threonylcarbamoyltransferase (343 aa).

The Fe cation site is built by H111 and H115. Substrate-binding positions include 135–139, D168, G181, and N280; that span reads VLSGG. D306 contributes to the Fe cation binding site.

Belongs to the KAE1 / TsaD family. Fe(2+) serves as cofactor.

The protein localises to the cytoplasm. The enzyme catalyses L-threonylcarbamoyladenylate + adenosine(37) in tRNA = N(6)-L-threonylcarbamoyladenosine(37) in tRNA + AMP + H(+). In terms of biological role, required for the formation of a threonylcarbamoyl group on adenosine at position 37 (t(6)A37) in tRNAs that read codons beginning with adenine. Is involved in the transfer of the threonylcarbamoyl moiety of threonylcarbamoyl-AMP (TC-AMP) to the N6 group of A37, together with TsaE and TsaB. TsaD likely plays a direct catalytic role in this reaction. The protein is tRNA N6-adenosine threonylcarbamoyltransferase of Protochlamydia amoebophila (strain UWE25).